Consider the following 582-residue polypeptide: Arginine--tRNA ligase (582 aa).

The 'HIGH' region signature appears at 127 to 137 (PNLAKEMHVGH).

It belongs to the class-I aminoacyl-tRNA synthetase family. In terms of assembly, monomer.

Its subcellular location is the cytoplasm. It catalyses the reaction tRNA(Arg) + L-arginine + ATP = L-arginyl-tRNA(Arg) + AMP + diphosphate. The protein is Arginine--tRNA ligase of Psychromonas ingrahamii (strain DSM 17664 / CCUG 51855 / 37).